Consider the following 111-residue polypeptide: Putative FAD-linked sulfhydryl oxidase 347L (111 aa).

Residues 2–109 (TDIDPHIWGP…LPESVARKKW (108 aa)) form the ERV/ALR sulfhydryl oxidase domain. An intrachain disulfide couples cysteine 49 to cysteine 52.

The protein belongs to the IIV-6 347L family. FAD is required as a cofactor.

It carries out the reaction 2 R'C(R)SH + O2 = R'C(R)S-S(R)CR' + H2O2. Functionally, FAD-dependent sulfhydryl oxidase that catalyzes disulfide bond formation. The protein is Putative FAD-linked sulfhydryl oxidase 347L of Invertebrate iridescent virus 6 (IIV-6).